A 159-amino-acid chain; its full sequence is Late embryogenesis abundant protein 50 (159 aa).

SMP domains are found at residues 30 to 87 and 96 to 151; these read TTLT…RNQK and NLGD…YKLN.

This sequence belongs to the LEA type SMP family.

The protein resides in the cytoplasm. Its subcellular location is the nucleus. Functionally, LEA proteins are late embryonic proteins abundant in higher plant seed embryos. The function of those proteins is not known. The sequence is that of Late embryogenesis abundant protein 50 from Arabidopsis thaliana (Mouse-ear cress).